The primary structure comprises 610 residues: Elongation factor 4 (610 aa).

The tr-type G domain occupies 13–195; that stretch reads SHIRNFSIVA…AIVNRLPAPK (183 aa). Residues 25–30 and 142–145 each bind GTP; these read DHGKST and NKID.

The protein belongs to the TRAFAC class translation factor GTPase superfamily. Classic translation factor GTPase family. LepA subfamily.

The protein localises to the cell inner membrane. The enzyme catalyses GTP + H2O = GDP + phosphate + H(+). Its function is as follows. Required for accurate and efficient protein synthesis under certain stress conditions. May act as a fidelity factor of the translation reaction, by catalyzing a one-codon backward translocation of tRNAs on improperly translocated ribosomes. Back-translocation proceeds from a post-translocation (POST) complex to a pre-translocation (PRE) complex, thus giving elongation factor G a second chance to translocate the tRNAs correctly. Binds to ribosomes in a GTP-dependent manner. This is Elongation factor 4 from Rhizobium leguminosarum bv. trifolii (strain WSM2304).